We begin with the raw amino-acid sequence, 92 residues long: MAKGQSLQDPYLNALRRERIPVSIYLVNGIKLQGQIESFDQFVILLKNTVSQMVYKHAISTVVPARSVSHNNGGTSHTQQAPAVEAVADKAE.

Residues 9-68 (DPYLNALRRERIPVSIYLVNGIKLQGQIESFDQFVILLKNTVSQMVYKHAISTVVPARSV) form the Sm domain. Over residues 69–81 (SHNNGGTSHTQQA) the composition is skewed to polar residues. Residues 69–92 (SHNNGGTSHTQQAPAVEAVADKAE) form a disordered region.

It belongs to the Hfq family. Homohexamer.

Functionally, RNA chaperone that binds small regulatory RNA (sRNAs) and mRNAs to facilitate mRNA translational regulation in response to envelope stress, environmental stress and changes in metabolite concentrations. Also binds with high specificity to tRNAs. The polypeptide is RNA-binding protein Hfq (Actinobacillus pleuropneumoniae serotype 5b (strain L20)).